Here is a 103-residue protein sequence, read N- to C-terminus: MAAISINVSTLKPLGDRVFVKVSESEEKTAGGILLPDSAKEKPQIGEVVAVGEGKRNDDGSRSAVDVKVGDKVLYSKYAGTDIKLSGDDYVLLSEKDILATVA.

It belongs to the GroES chaperonin family. As to quaternary structure, heptamer of 7 subunits arranged in a ring. Interacts with the chaperonin GroEL.

The protein localises to the cytoplasm. Together with the chaperonin GroEL, plays an essential role in assisting protein folding. The GroEL-GroES system forms a nano-cage that allows encapsulation of the non-native substrate proteins and provides a physical environment optimized to promote and accelerate protein folding. GroES binds to the apical surface of the GroEL ring, thereby capping the opening of the GroEL channel. This chain is Co-chaperonin GroES, found in Picosynechococcus sp. (strain ATCC 27264 / PCC 7002 / PR-6) (Agmenellum quadruplicatum).